The following is a 124-amino-acid chain: S-adenosylmethionine decarboxylase proenzyme (124 aa).

S63 (schiff-base intermediate with substrate; via pyruvic acid) is an active-site residue. At S63 the chain carries Pyruvic acid (Ser); by autocatalysis. The active-site Proton acceptor; for processing activity is H68. Residue C83 is the Proton donor; for catalytic activity of the active site.

The protein belongs to the prokaryotic AdoMetDC family. Type 1 subfamily. Heterotetramer of two alpha and two beta chains arranged as a dimer of alpha/beta heterodimers. It depends on pyruvate as a cofactor. Post-translationally, is synthesized initially as an inactive proenzyme. Formation of the active enzyme involves a self-maturation process in which the active site pyruvoyl group is generated from an internal serine residue via an autocatalytic post-translational modification. Two non-identical subunits are generated from the proenzyme in this reaction, and the pyruvate is formed at the N-terminus of the alpha chain, which is derived from the carboxyl end of the proenzyme. The post-translation cleavage follows an unusual pathway, termed non-hydrolytic serinolysis, in which the side chain hydroxyl group of the serine supplies its oxygen atom to form the C-terminus of the beta chain, while the remainder of the serine residue undergoes an oxidative deamination to produce ammonia and the pyruvoyl group blocking the N-terminus of the alpha chain.

The enzyme catalyses S-adenosyl-L-methionine + H(+) = S-adenosyl 3-(methylsulfanyl)propylamine + CO2. It functions in the pathway amine and polyamine biosynthesis; S-adenosylmethioninamine biosynthesis; S-adenosylmethioninamine from S-adenosyl-L-methionine: step 1/1. In terms of biological role, catalyzes the decarboxylation of S-adenosylmethionine to S-adenosylmethioninamine (dcAdoMet), the propylamine donor required for the synthesis of the polyamines spermine and spermidine from the diamine putrescine. This is S-adenosylmethionine decarboxylase proenzyme from Geobacillus sp. (strain WCH70).